The chain runs to 448 residues: Argininosuccinate synthase (448 aa).

Residues 17–25 and alanine 43 each bind ATP; that span reads AFSGGLDTS. Tyrosine 99 contacts L-citrulline. ATP is bound by residues glycine 129 and threonine 131. Threonine 131, asparagine 135, and aspartate 136 together coordinate L-aspartate. Asparagine 135 serves as a coordination point for L-citrulline. Aspartate 136 contacts ATP. L-citrulline contacts are provided by arginine 139 and serine 192. Aspartate 194 serves as a coordination point for ATP. Positions 201, 203, and 280 each coordinate L-citrulline.

Belongs to the argininosuccinate synthase family. Type 2 subfamily. As to quaternary structure, homotetramer.

It localises to the cytoplasm. It catalyses the reaction L-citrulline + L-aspartate + ATP = 2-(N(omega)-L-arginino)succinate + AMP + diphosphate + H(+). It participates in amino-acid biosynthesis; L-arginine biosynthesis; L-arginine from L-ornithine and carbamoyl phosphate: step 2/3. The polypeptide is Argininosuccinate synthase (Enterobacter sp. (strain 638)).